The sequence spans 296 residues: Myeloid differentiation primary response protein MyD88 (296 aa).

One can recognise a Death domain in the interval 54–109 (MGFEYLEIRELETRPDPTRSLLDAWQGRSGASVGRLLELLALLDREDILKELKSRI). The intermediate domain stretch occupies residues 110 to 155 (EEDCQKYLGKQQNQESEKPLQVARVESSVPQTKELGGITTLDDPLG). Residues 159-293 (ELFDAFICYC…WFWTRLAKAL (135 aa)) form the TIR domain. Serine 244 carries the phosphoserine modification.

As to quaternary structure, homodimer. Also forms heterodimers with TIRAP. Binds to TLR2, TLR4, IRAK1, IRAK2 and IRAK4 via their respective TIR domains. Interacts with IL18R1. Interacts with BMX, IL1RL1, IKBKE and IRF7. Interacts with LRRFIP1 and LRRFIP2; this interaction positively regulates Toll-like receptor (TLR) signaling in response to agonist. Interacts with FLII. LRRFIP1 and LRRFIP2 compete with FLII for MYD88-binding. Interacts with IRF1. Upon IL1B treatment, forms a complex with PELI1, IRAK1, IRAK4 and TRAF6; this complex recruits MAP3K7/TAK1, TAB1 and TAB2 to mediate NF-kappa-B activation. Direct binding of SMAD6 to PELI1 prevents the complex formation and hence negatively regulates IL1R-TLR signaling and eventually NF-kappa-B-mediated gene expression. May interact with PIK3AP1. Interacts (via TIR domain) with DHX9 (via H2A and OB-fold regions); this interaction is direct. Interacts with OTUD4 deubiquitinase; the interaction is direct. Ubiquitinated; undergoes 'Lys-63'-linked polyubiquitination. OTUD4 specifically hydrolyzes 'Lys-63'-linked polyubiquitinated MYD88. Deubiquitinated by USP3 that cleaves 'Lys-63'-linked ubiquitin chains leading to inhibition of MYD88-induced NF-kappa-B signaling. As to expression, detected in bone marrow. Isoform 1 is expressed in testis, kidney, lung, ovary, adrenal gland, provstate, thymus and heart, and weakly in skeletal muscle, liver, spleen and brain. Isoform 2 is mainly expressed in the spleen and weakly in brain.

It localises to the cytoplasm. The protein resides in the nucleus. Its function is as follows. Adapter protein involved in the Toll-like receptor and IL-1 receptor signaling pathway in the innate immune response. Acts via IRAK1, IRAK2, IRF7 and TRAF6, leading to NF-kappa-B activation, cytokine secretion and the inflammatory response. Increases IL-8 transcription. Involved in IL-18-mediated signaling pathway. Activates IRF1 resulting in its rapid migration into the nucleus to mediate an efficient induction of IFN-beta, NOS2/INOS, and IL12A genes. Upon TLR8 activation by GU-rich single-stranded RNA (GU-rich RNA) derived from viruses, induces IL1B release through NLRP3 inflammasome activation. MyD88-mediated signaling in intestinal epithelial cells is crucial for maintenance of gut homeostasis and controls the expression of the antimicrobial lectin REG3G in the small intestine. Mediates leukocyte recruitment at the inflammatory site. Defective in its ability to induce IRAK phosphorylation and NF-kappa-B activation and can function as a negative regulator of activation by IL-1 or lipopolysaccharide (LPS). The chain is Myeloid differentiation primary response protein MyD88 from Mus musculus (Mouse).